We begin with the raw amino-acid sequence, 436 residues long: Tol-Pal system protein TolB (436 aa).

A signal peptide spans 1 to 19 (MVKCSLIRALMVVAGLVGA).

It belongs to the TolB family. In terms of assembly, the Tol-Pal system is composed of five core proteins: the inner membrane proteins TolA, TolQ and TolR, the periplasmic protein TolB and the outer membrane protein Pal. They form a network linking the inner and outer membranes and the peptidoglycan layer.

The protein resides in the periplasm. Functionally, part of the Tol-Pal system, which plays a role in outer membrane invagination during cell division and is important for maintaining outer membrane integrity. The protein is Tol-Pal system protein TolB of Rhizobium etli (strain ATCC 51251 / DSM 11541 / JCM 21823 / NBRC 15573 / CFN 42).